Consider the following 208-residue polypeptide: Large ribosomal subunit protein uL3 (208 aa).

Positions 126-150 (NQSRGPMAHGSRYHRRPGSMGPVAP) are disordered.

Belongs to the universal ribosomal protein uL3 family. Part of the 50S ribosomal subunit. Forms a cluster with proteins L14 and L19.

In terms of biological role, one of the primary rRNA binding proteins, it binds directly near the 3'-end of the 23S rRNA, where it nucleates assembly of the 50S subunit. The polypeptide is Large ribosomal subunit protein uL3 (Exiguobacterium sibiricum (strain DSM 17290 / CCUG 55495 / CIP 109462 / JCM 13490 / 255-15)).